We begin with the raw amino-acid sequence, 411 residues long: Citrate synthase (411 aa).

Catalysis depends on residues histidine 304 and aspartate 363.

This sequence belongs to the citrate synthase family.

The enzyme catalyses oxaloacetate + acetyl-CoA + H2O = citrate + CoA + H(+). Its pathway is carbohydrate metabolism; tricarboxylic acid cycle; isocitrate from oxaloacetate: step 1/2. This is Citrate synthase (gltA) from Rickettsia massiliae.